Reading from the N-terminus, the 1004-residue chain is MAKQEQAPGRANDVFALTSFLYGGNADYIEELYAKYEDDPNSVDPQWRDFFAKLGDNADDVKKNAEGPSWTRKNWPIAANGELVSALDGNWAEVEKHVTDKLKGKAAKGEAKGAAGTPLTAEEITQAARDSVRAIMMIRAYRMRGHLHANLDPLGLAEKPNDYNELEPENYGFTPADYNRKIFIDNVLGLEYATVPEMLDILKRTYCGAIGVEFMHISDPAEKAWIQERIEGPDKKVAFTPEGKMAILSKLIEAEGFEQFIDVKYKGTKRFGLDGGESLIPALEQIVKRGGQMGLKEVVLGMAHRGRLNVLSQVMGKPHRAIFHEFKGGSYTPDDVEGSGDVKYHLGASSDREFDGNKVHLSLTANPSHLEIVNPVVMGKARAKQDLLVGRTRDDMVPLSERAKVLPLLLHGDAAFAGQGVVAECLGLSGLKGHRVAGTLHFIINNQIGFTTNPAFSRSSPYPSDVAKMIEAPIFHVNGDDPEAVVFAAKVATEFRMTFHKPVVIDMFCYRRFGHNEGDEPSFTQPLMYKAIRAHKTTVQLYGEKLIAEGLVTQDDIDRMKADWRQKLEGEFEAGQSYKPNKADWLDGAWAGLRTADNADEQRCGKTAVPVKTLKEIGKKLVEVPKDFHVHRTIQRFLDNRAKMMETGEGIDWATAESLAFGSLAVEGHPIRLSGQDVERGTFSQRHTVLYDQENQNRYIPLNNLQKGQAIYEAINSMLSEEAVLGYEYGYSLSDPRALVLWEAQFGDFANGAQVVFDQFISSGERKWLRMSGLVCLLPHGFEGQGPEHSSARLERYLQLCAEDNMQVANVTTPANYFHILRRQMKRDFRKPLIMMTPKSLLRHKRAISTLAELSGESSFHRLLWDDAQYNKDEGIKLQKDAKIRRVVLCSGKVYYDLYEEREKRGIDDVYLLRVEQLYPFPAKALINELSRFRHAEMVWCQEEPKNMGAWSFIDPYLEWVLAHIDAKHQRVRYAGRPAAASPATGLMSKHLAQLAAFLEDALG.

This sequence belongs to the alpha-ketoglutarate dehydrogenase family. As to quaternary structure, homodimer. Part of the 2-oxoglutarate dehydrogenase (OGDH) complex composed of E1 (2-oxoglutarate dehydrogenase), E2 (dihydrolipoamide succinyltransferase) and E3 (dihydrolipoamide dehydrogenase); the complex contains multiple copies of the three enzymatic components (E1, E2 and E3). The cofactor is thiamine diphosphate.

The enzyme catalyses N(6)-[(R)-lipoyl]-L-lysyl-[protein] + 2-oxoglutarate + H(+) = N(6)-[(R)-S(8)-succinyldihydrolipoyl]-L-lysyl-[protein] + CO2. Its function is as follows. E1 component of the 2-oxoglutarate dehydrogenase (OGDH) complex which catalyzes the decarboxylation of 2-oxoglutarate, the first step in the conversion of 2-oxoglutarate to succinyl-CoA and CO(2). The polypeptide is 2-oxoglutarate dehydrogenase E1 component (Brucella ovis (strain ATCC 25840 / 63/290 / NCTC 10512)).